The chain runs to 72 residues: Translation initiation factor IF-1 (72 aa).

In terms of domain architecture, S1-like spans 1-72 (MSDKSIKMQA…SNGRITYRHK (72 aa)).

The protein belongs to the IF-1 family. Component of the 30S ribosomal translation pre-initiation complex which assembles on the 30S ribosome in the order IF-2 and IF-3, IF-1 and N-formylmethionyl-tRNA(fMet); mRNA recruitment can occur at any time during PIC assembly.

The protein resides in the cytoplasm. In terms of biological role, one of the essential components for the initiation of protein synthesis. Stabilizes the binding of IF-2 and IF-3 on the 30S subunit to which N-formylmethionyl-tRNA(fMet) subsequently binds. Helps modulate mRNA selection, yielding the 30S pre-initiation complex (PIC). Upon addition of the 50S ribosomal subunit IF-1, IF-2 and IF-3 are released leaving the mature 70S translation initiation complex. The protein is Translation initiation factor IF-1 of Mycoplasmopsis pulmonis (strain UAB CTIP) (Mycoplasma pulmonis).